Reading from the N-terminus, the 369-residue chain is tRNA-specific 2-thiouridylase MnmA (369 aa).

ATP contacts are provided by residues 16–23 and methionine 42; that span reads AMSGGVDS. Cysteine 110 (nucleophile) is an active-site residue. A disulfide bridge links cysteine 110 with cysteine 206. Glycine 134 lines the ATP pocket. Positions 156–158 are interaction with tRNA; the sequence is KDQ. Cysteine 206 serves as the catalytic Cysteine persulfide intermediate.

This sequence belongs to the MnmA/TRMU family.

Its subcellular location is the cytoplasm. It carries out the reaction S-sulfanyl-L-cysteinyl-[protein] + uridine(34) in tRNA + AH2 + ATP = 2-thiouridine(34) in tRNA + L-cysteinyl-[protein] + A + AMP + diphosphate + H(+). Catalyzes the 2-thiolation of uridine at the wobble position (U34) of tRNA, leading to the formation of s(2)U34. This Orientia tsutsugamushi (strain Boryong) (Rickettsia tsutsugamushi) protein is tRNA-specific 2-thiouridylase MnmA.